The following is a 349-amino-acid chain: Phosphoribosylformylglycinamidine cyclo-ligase (349 aa).

Belongs to the AIR synthase family.

The protein localises to the cytoplasm. It carries out the reaction 2-formamido-N(1)-(5-O-phospho-beta-D-ribosyl)acetamidine + ATP = 5-amino-1-(5-phospho-beta-D-ribosyl)imidazole + ADP + phosphate + H(+). It functions in the pathway purine metabolism; IMP biosynthesis via de novo pathway; 5-amino-1-(5-phospho-D-ribosyl)imidazole from N(2)-formyl-N(1)-(5-phospho-D-ribosyl)glycinamide: step 2/2. This is Phosphoribosylformylglycinamidine cyclo-ligase from Bordetella pertussis (strain Tohama I / ATCC BAA-589 / NCTC 13251).